Reading from the N-terminus, the 119-residue chain is Large ribosomal subunit protein bL20 (119 aa).

This sequence belongs to the bacterial ribosomal protein bL20 family.

Functionally, binds directly to 23S ribosomal RNA and is necessary for the in vitro assembly process of the 50S ribosomal subunit. It is not involved in the protein synthesizing functions of that subunit. The polypeptide is Large ribosomal subunit protein bL20 (Levilactobacillus brevis (strain ATCC 367 / BCRC 12310 / CIP 105137 / JCM 1170 / LMG 11437 / NCIMB 947 / NCTC 947) (Lactobacillus brevis)).